The sequence spans 316 residues: ATP synthase gamma chain (316 aa).

It belongs to the ATPase gamma chain family. As to quaternary structure, F-type ATPases have 2 components, CF(1) - the catalytic core - and CF(0) - the membrane proton channel. CF(1) has five subunits: alpha(3), beta(3), gamma(1), delta(1), epsilon(1). CF(0) has three main subunits: a, b and c.

It is found in the cellular thylakoid membrane. Functionally, produces ATP from ADP in the presence of a proton gradient across the membrane. The gamma chain is believed to be important in regulating ATPase activity and the flow of protons through the CF(0) complex. The chain is ATP synthase gamma chain from Synechococcus sp. (strain ATCC 27144 / PCC 6301 / SAUG 1402/1) (Anacystis nidulans).